The following is a 317-amino-acid chain: Olfactory receptor 2B11 (317 aa).

Residues 1–29 (MKSDNHSFLGDSPKAFILLGVSDRPWLEL) lie on the Extracellular side of the membrane. Asn-5 carries N-linked (GlcNAc...) asparagine glycosylation. Residues 30 to 53 (PLFVVLLLSYVLAMLGNVAIILAS) form a helical membrane-spanning segment. At 54-61 (RVDPQLHS) the chain is on the cytoplasmic side. The chain crosses the membrane as a helical span at residues 62–83 (PMYIFLSHLSFLDLCYTTTTVP). The Extracellular portion of the chain corresponds to 84–104 (QMLVNMGSSQKTISYGGCTVQ). A disulfide bond links Cys-101 and Cys-193. Residues 105–124 (YAVFHWLGCTECIVLAAMAL) form a helical membrane-spanning segment. Over 125-143 (DRYVAICKPLHYAVLMHRA) the chain is Cytoplasmic. Residues 144–162 (LCQQLVALAWLSGFGNSFV) form a helical membrane-spanning segment. Over 163–199 (QVVLTVQLPFCGRQVLNNFFCEVPAVIKLSCADTAVN) the chain is Extracellular. Asn-199 carries an N-linked (GlcNAc...) asparagine glycan. A helical transmembrane segment spans residues 200 to 223 (DTILAVLVAFFVLVPLALILLSYG). The Cytoplasmic segment spans residues 224–240 (FIARAVLRIQSSKGRHK). Residues 241 to 263 (AFGTCSSHLMIVSLFYLPAIYMY) form a helical membrane-spanning segment. Over 264 to 276 (LQPPSSYSQEQGK) the chain is Extracellular. Residues 277-296 (FISLFYSIITPTLNPFTYTL) form a helical membrane-spanning segment. The Cytoplasmic segment spans residues 297-317 (RNKDMKGALRRLLARIWRLCG).

This sequence belongs to the G-protein coupled receptor 1 family.

The protein localises to the cell membrane. Its function is as follows. Odorant receptor. This is Olfactory receptor 2B11 (OR2B11) from Homo sapiens (Human).